Here is a 158-residue protein sequence, read N- to C-terminus: uncharacterized protein (158 aa).

4 consecutive transmembrane segments (helical) span residues 12-32 (IITL…AVVV), 39-59 (LDIL…SLSV), 90-110 (LIYL…FNTI), and 113-133 (IIST…WLPL).

The protein localises to the cell membrane. This is an uncharacterized protein from Mycoplasma genitalium (strain ATCC 33530 / DSM 19775 / NCTC 10195 / G37) (Mycoplasmoides genitalium).